A 238-amino-acid chain; its full sequence is Uridylate kinase (238 aa).

10 to 13 (KFSG) is a binding site for ATP. The interval 18–23 (GDSGFG) is involved in allosteric activation by GTP. Position 52 (Gly-52) interacts with UMP. ATP contacts are provided by Gly-53 and Arg-57. UMP-binding positions include Asp-73 and 134-141 (TGNPFFTT). The ATP site is built by Thr-161, Tyr-167, and Asp-170.

It belongs to the UMP kinase family. In terms of assembly, homohexamer.

It is found in the cytoplasm. The enzyme catalyses UMP + ATP = UDP + ADP. The protein operates within pyrimidine metabolism; CTP biosynthesis via de novo pathway; UDP from UMP (UMPK route): step 1/1. With respect to regulation, allosterically activated by GTP. Inhibited by UTP. Functionally, catalyzes the reversible phosphorylation of UMP to UDP. This is Uridylate kinase from Campylobacter curvus (strain 525.92).